The primary structure comprises 116 residues: Prefoldin subunit beta (116 aa).

The protein belongs to the prefoldin subunit beta family. In terms of assembly, heterohexamer of two alpha and four beta subunits.

Its subcellular location is the cytoplasm. Its function is as follows. Molecular chaperone capable of stabilizing a range of proteins. Seems to fulfill an ATP-independent, HSP70-like function in archaeal de novo protein folding. In Methanobrevibacter smithii (strain ATCC 35061 / DSM 861 / OCM 144 / PS), this protein is Prefoldin subunit beta.